Reading from the N-terminus, the 473-residue chain is Ribosomal RNA small subunit methyltransferase F (473 aa).

Residues 123-129 (AAAPGSK), Glu147, Asp174, and Asp192 contribute to the S-adenosyl-L-methionine site. Cys245 acts as the Nucleophile in catalysis.

It belongs to the class I-like SAM-binding methyltransferase superfamily. RsmB/NOP family.

The protein localises to the cytoplasm. It catalyses the reaction cytidine(1407) in 16S rRNA + S-adenosyl-L-methionine = 5-methylcytidine(1407) in 16S rRNA + S-adenosyl-L-homocysteine + H(+). In terms of biological role, specifically methylates the cytosine at position 1407 (m5C1407) of 16S rRNA. The sequence is that of Ribosomal RNA small subunit methyltransferase F from Vibrio cholerae serotype O1 (strain ATCC 39315 / El Tor Inaba N16961).